Here is a 621-residue protein sequence, read N- to C-terminus: KIF-binding protein (621 aa).

Residues 51–75 (GPAPEDEDERPEAEDGPGAGDHALG) are disordered. The span at 54-65 (PEDEDERPEAED) shows a compositional bias: acidic residues. A Phosphoserine modification is found at Ser-178.

Belongs to the KIF-binding protein family. In terms of assembly, interacts with KIF1B; positively regulates KIF1B microtubule motor activity. Interacts with STMN2. Highly expressed in heart, brain, ovary, testis, spinal cord and all specific brain regions examined. Moderate expressed at intermediate level in all other adult tissues examined, as well as in fetal liver and brain. Not expressed in blood leukocytes.

Its subcellular location is the cytoplasm. The protein resides in the cytoskeleton. Functionally, activator of KIF1B plus-end-directed microtubule motor activity. Required for organization of axonal microtubules, and axonal outgrowth and maintenance during peripheral and central nervous system development. This Homo sapiens (Human) protein is KIF-binding protein.